The following is a 433-amino-acid chain: Probable non-inhibitory serpin-Z5 (433 aa).

Residues 1 to 12 show a composition bias toward basic and acidic residues; the sequence is MEPKEKKQKLDT. The tract at residues 1-43 is disordered; the sequence is MEPKEKKQKLDTSEVASPSLSKTHLKKKKTKKQKIRKSQEITS. Positions 23 to 36 are enriched in basic residues; it reads THLKKKKTKKQKIR. The segment at 380–404 is RCL; it reads GTEAVTFTAFRSAYLGCALVKPIDF.

This sequence belongs to the serpin family. In terms of tissue distribution, weakly expressed during seedling development.

The chain is Probable non-inhibitory serpin-Z5 from Arabidopsis thaliana (Mouse-ear cress).